A 451-amino-acid polypeptide reads, in one-letter code: Trimethylamine monooxygenase (451 aa).

FAD-binding residues include Ser12, Glu37, Gln39, Leu45, Trp46, and His62. 2 residues coordinate NADP(+): Trp70 and Asn72. 2 residues coordinate FAD: Asn72 and Val125. The NADP(+) site is built by Ser204, Ser205, Ser207, and Arg228. Gln317 and Thr320 together coordinate FAD. An NADP(+)-binding site is contributed by Arg411.

This sequence belongs to the FMO family. FAD serves as cofactor.

It catalyses the reaction trimethylamine + NADPH + O2 = trimethylamine N-oxide + NADP(+) + H2O. In terms of biological role, catalyzes the oxidation of trimethylamine (TMA) to produce trimethylamine N-oxide (TMAO). In vitro, has a broad substrate specificity, oxidizing many nitrogen- and sulfur-containing compounds, including dimethylamine (DMA), dimethylsulfide (DMS), dimethylsulfoxide (DMSO), cysteamine, methimazole and dimethylaniline. The protein is Trimethylamine monooxygenase of Methylocella silvestris (strain DSM 15510 / CIP 108128 / LMG 27833 / NCIMB 13906 / BL2).